A 295-amino-acid polypeptide reads, in one-letter code: Pyridoxal 5'-phosphate synthase subunit PdxS (295 aa).

D25 lines the D-ribose 5-phosphate pocket. The active-site Schiff-base intermediate with D-ribose 5-phosphate is K82. G154 provides a ligand contact to D-ribose 5-phosphate. R166 lines the D-glyceraldehyde 3-phosphate pocket. D-ribose 5-phosphate-binding positions include G215 and 236-237 (GS).

Belongs to the PdxS/SNZ family. In terms of assembly, in the presence of PdxT, forms a dodecamer of heterodimers.

The catalysed reaction is aldehydo-D-ribose 5-phosphate + D-glyceraldehyde 3-phosphate + L-glutamine = pyridoxal 5'-phosphate + L-glutamate + phosphate + 3 H2O + H(+). Its pathway is cofactor biosynthesis; pyridoxal 5'-phosphate biosynthesis. Functionally, catalyzes the formation of pyridoxal 5'-phosphate from ribose 5-phosphate (RBP), glyceraldehyde 3-phosphate (G3P) and ammonia. The ammonia is provided by the PdxT subunit. Can also use ribulose 5-phosphate and dihydroxyacetone phosphate as substrates, resulting from enzyme-catalyzed isomerization of RBP and G3P, respectively. The protein is Pyridoxal 5'-phosphate synthase subunit PdxS of Staphylococcus haemolyticus (strain JCSC1435).